Here is a 226-residue protein sequence, read N- to C-terminus: ATP synthase F(0) complex subunit a (226 aa).

The next 6 membrane-spanning stretches (helical) occupy residues 6 to 26 (FASF…IVLF), 68 to 88 (WALM…LGLL), 97 to 117 (QLSM…ITGF), 138 to 158 (IPML…ALAV), 164 to 184 (ITAG…LMSI), and 189 to 209 (ALIT…VAMI).

The protein belongs to the ATPase A chain family. In terms of assembly, component of the ATP synthase complex composed at least of ATP5F1A/subunit alpha, ATP5F1B/subunit beta, ATP5MC1/subunit c (homooctomer), MT-ATP6/subunit a, MT-ATP8/subunit 8, ATP5ME/subunit e, ATP5MF/subunit f, ATP5MG/subunit g, ATP5MK/subunit k, ATP5MJ/subunit j, ATP5F1C/subunit gamma, ATP5F1D/subunit delta, ATP5F1E/subunit epsilon, ATP5PF/subunit F6, ATP5PB/subunit b, ATP5PD/subunit d, ATP5PO/subunit OSCP. ATP synthase complex consists of a soluble F(1) head domain (subunits alpha(3) and beta(3)) - the catalytic core - and a membrane F(0) domain - the membrane proton channel (subunits c, a, 8, e, f, g, k and j). These two domains are linked by a central stalk (subunits gamma, delta, and epsilon) rotating inside the F1 region and a stationary peripheral stalk (subunits F6, b, d, and OSCP). Interacts with DNAJC30; interaction is direct.

It is found in the mitochondrion inner membrane. It carries out the reaction H(+)(in) = H(+)(out). Functionally, subunit a, of the mitochondrial membrane ATP synthase complex (F(1)F(0) ATP synthase or Complex V) that produces ATP from ADP in the presence of a proton gradient across the membrane which is generated by electron transport complexes of the respiratory chain. ATP synthase complex consist of a soluble F(1) head domain - the catalytic core - and a membrane F(1) domain - the membrane proton channel. These two domains are linked by a central stalk rotating inside the F(1) region and a stationary peripheral stalk. During catalysis, ATP synthesis in the catalytic domain of F(1) is coupled via a rotary mechanism of the central stalk subunits to proton translocation. With the subunit c (ATP5MC1), forms the proton-conducting channel in the F(0) domain, that contains two crucial half-channels (inlet and outlet) that facilitate proton movement from the mitochondrial intermembrane space (IMS) into the matrix. Protons are taken up via the inlet half-channel and released through the outlet half-channel, following a Grotthuss mechanism. In Bos indicus (Zebu), this protein is ATP synthase F(0) complex subunit a.